Consider the following 247-residue polypeptide: NAD-dependent protein deacetylase (247 aa).

A Deacetylase sirtuin-type domain is found at 1-244 (MIYEKVAEEL…PKILENVRQK (244 aa)). 8 residues coordinate NAD(+): Ala-22, Thr-26, Phe-33, Arg-34, Gln-98, Ile-100, Asp-101, and His-116. Phe-33 contributes to the nicotinamide binding site. Residues Ile-100 and Asp-101 each contribute to the nicotinamide site. His-116 (proton acceptor) is an active-site residue. Cys-124, Cys-127, Cys-149, and Cys-151 together coordinate Zn(2+). Ser-187, Ser-188, Asn-212, and Val-230 together coordinate NAD(+).

It belongs to the sirtuin family. Class U subfamily. Monomer. Requires Zn(2+) as cofactor.

The protein resides in the cytoplasm. It carries out the reaction N(6)-acetyl-L-lysyl-[protein] + NAD(+) + H2O = 2''-O-acetyl-ADP-D-ribose + nicotinamide + L-lysyl-[protein]. NAD-dependent protein deacetylase which modulates the activities of several enzymes which are inactive in their acetylated form. Deacetylates the N-terminal lysine residue of albA1, the major archaeal DNA compaction protein and that, in turn, increases albA1's DNA binding affinity, thereby repressing transcription. This chain is NAD-dependent protein deacetylase, found in Saccharolobus solfataricus (strain ATCC 35092 / DSM 1617 / JCM 11322 / P2) (Sulfolobus solfataricus).